Reading from the N-terminus, the 46-residue chain is Major cold shock protein (46 aa).

The region spanning 1-46 (EKGFGFLTQNNGGADVFVHFRAIASEGFKTLTEGQKVSFDVEQGQK) is the CSD domain.

As to quaternary structure, homodimer.

The protein resides in the cytoplasm. This chain is Major cold shock protein (cspA), found in Photobacterium leiognathi subsp. mandapamensis (Photobacterium mandapamensis).